Reading from the N-terminus, the 196-residue chain is Large ribosomal subunit protein bL25 (196 aa).

This sequence belongs to the bacterial ribosomal protein bL25 family. CTC subfamily. In terms of assembly, part of the 50S ribosomal subunit; part of the 5S rRNA/L5/L18/L25 subcomplex. Contacts the 5S rRNA. Binds to the 5S rRNA independently of L5 and L18.

In terms of biological role, this is one of the proteins that binds to the 5S RNA in the ribosome where it forms part of the central protuberance. The polypeptide is Large ribosomal subunit protein bL25 (Bacteroides fragilis (strain ATCC 25285 / DSM 2151 / CCUG 4856 / JCM 11019 / LMG 10263 / NCTC 9343 / Onslow / VPI 2553 / EN-2)).